Here is a 62-residue protein sequence, read N- to C-terminus: Large ribosomal subunit protein bL32 (62 aa).

The span at 1 to 19 shows a compositional bias: basic residues; that stretch reads MPNPKRRHSKARTGNRRAH. A disordered region spans residues 1-23; that stretch reads MPNPKRRHSKARTGNRRAHDHLS.

It belongs to the bacterial ribosomal protein bL32 family.

This is Large ribosomal subunit protein bL32 from Koribacter versatilis (strain Ellin345).